A 507-amino-acid chain; its full sequence is Histidine--tRNA ligase (507 aa).

It belongs to the class-II aminoacyl-tRNA synthetase family. In terms of assembly, homodimer.

The protein localises to the cytoplasm. The catalysed reaction is tRNA(His) + L-histidine + ATP = L-histidyl-tRNA(His) + AMP + diphosphate + H(+). In Rhizobium leguminosarum bv. trifolii (strain WSM2304), this protein is Histidine--tRNA ligase.